We begin with the raw amino-acid sequence, 162 residues long: Urease subunit beta (162 aa).

Residues 116–162 (WRRSSAAGDAPQELPQVEAAERGRKLDDATDVDTNVGTEEGFEEGRN) form a disordered region. Positions 134-143 (AAERGRKLDD) are enriched in basic and acidic residues.

The protein belongs to the urease beta subunit family. Heterotrimer of UreA (gamma), UreB (beta) and UreC (alpha) subunits. Three heterotrimers associate to form the active enzyme.

The protein localises to the cytoplasm. The enzyme catalyses urea + 2 H2O + H(+) = hydrogencarbonate + 2 NH4(+). The protein operates within nitrogen metabolism; urea degradation; CO(2) and NH(3) from urea (urease route): step 1/1. The polypeptide is Urease subunit beta (Corynebacterium glutamicum (strain ATCC 13032 / DSM 20300 / JCM 1318 / BCRC 11384 / CCUG 27702 / LMG 3730 / NBRC 12168 / NCIMB 10025 / NRRL B-2784 / 534)).